Reading from the N-terminus, the 247-residue chain is Coiled-coil domain-containing protein 124 homolog (247 aa).

Residues 1 to 146 (MGGKKFGTNS…TTTTGSDDHE (146 aa)) form a disordered region. Residues 8 to 85 (TNSKAEEARS…QEDKEIKERY (78 aa)) are a coiled coil. Residues 11 to 114 (KAEEARSKKA…EQKQREKELA (104 aa)) show a composition bias toward basic and acidic residues. A compositionally biased stretch (low complexity) spans 122–140 (VVVVPTTTTTTTTTTTTTT).

The protein belongs to the CCDC124 family. As to quaternary structure, associates with translationally inactive ribosomes in the nonrotated state.

Functionally, ribosome-binding protein involved in ribosome hibernation: associates with translationally inactive ribosomes and stabilizes the nonrotated conformation of the 80S ribosome, thereby promoting ribosome preservation and storage. The sequence is that of Coiled-coil domain-containing protein 124 homolog from Dictyostelium discoideum (Social amoeba).